The primary structure comprises 116 residues: Large ribosomal subunit protein uL18 (116 aa).

Belongs to the universal ribosomal protein uL18 family. In terms of assembly, part of the 50S ribosomal subunit; part of the 5S rRNA/L5/L18/L25 subcomplex. Contacts the 5S and 23S rRNAs.

Its function is as follows. This is one of the proteins that bind and probably mediate the attachment of the 5S RNA into the large ribosomal subunit, where it forms part of the central protuberance. The chain is Large ribosomal subunit protein uL18 from Shewanella oneidensis (strain ATCC 700550 / JCM 31522 / CIP 106686 / LMG 19005 / NCIMB 14063 / MR-1).